The following is a 244-amino-acid chain: Inactive chemokine-binding protein (244 aa).

The disordered stretch occupies residues 1-79 (MHVPASLQQS…STSVEDVDPP (79 aa)). A compositionally biased stretch (polar residues) spans 37–53 (QDQTPTNDKICQSVTEI). Positions 54-77 (TESESDPDPEVESEDDSTSVEDVD) are enriched in acidic residues.

The protein belongs to the orthopoxvirus OPG001 family.

The protein resides in the host cytoplasm. The protein is truncated in this vaccinal strain and presumably inactive, because the lack of signal peptide prevents the protein of being secreted. In the other strains inhibits host immune defense by binding to host chemokines. Binds host CC chemokines (beta chemokines) such as RANTES with high affinity, but not CXC or C chemokines (alpha and gamma chemokines). The polypeptide is Inactive chemokine-binding protein (OPG001) (Vaccinia virus (strain Copenhagen) (VACV)).